The sequence spans 601 residues: Elongation factor 4 (601 aa).

The tr-type G domain maps to 6–188 (DHIRNFSIVA…AIVHQLPPPR (183 aa)). Residues 18-23 (DHGKST) and 135-138 (NKVD) contribute to the GTP site.

Belongs to the TRAFAC class translation factor GTPase superfamily. Classic translation factor GTPase family. LepA subfamily.

The protein resides in the cell inner membrane. The enzyme catalyses GTP + H2O = GDP + phosphate + H(+). Required for accurate and efficient protein synthesis under certain stress conditions. May act as a fidelity factor of the translation reaction, by catalyzing a one-codon backward translocation of tRNAs on improperly translocated ribosomes. Back-translocation proceeds from a post-translocation (POST) complex to a pre-translocation (PRE) complex, thus giving elongation factor G a second chance to translocate the tRNAs correctly. Binds to ribosomes in a GTP-dependent manner. The chain is Elongation factor 4 from Mesorhizobium japonicum (strain LMG 29417 / CECT 9101 / MAFF 303099) (Mesorhizobium loti (strain MAFF 303099)).